Reading from the N-terminus, the 158-residue chain is Crossover junction endodeoxyribonuclease RuvC (158 aa).

Residues D7, E66, and D139 contribute to the active site. Mg(2+)-binding residues include D7, E66, and D139.

The protein belongs to the RuvC family. In terms of assembly, homodimer which binds Holliday junction (HJ) DNA. The HJ becomes 2-fold symmetrical on binding to RuvC with unstacked arms; it has a different conformation from HJ DNA in complex with RuvA. In the full resolvosome a probable DNA-RuvA(4)-RuvB(12)-RuvC(2) complex forms which resolves the HJ. Mg(2+) serves as cofactor.

It is found in the cytoplasm. The catalysed reaction is Endonucleolytic cleavage at a junction such as a reciprocal single-stranded crossover between two homologous DNA duplexes (Holliday junction).. Functionally, the RuvA-RuvB-RuvC complex processes Holliday junction (HJ) DNA during genetic recombination and DNA repair. Endonuclease that resolves HJ intermediates. Cleaves cruciform DNA by making single-stranded nicks across the HJ at symmetrical positions within the homologous arms, yielding a 5'-phosphate and a 3'-hydroxyl group; requires a central core of homology in the junction. The consensus cleavage sequence is 5'-(A/T)TT(C/G)-3'. Cleavage occurs on the 3'-side of the TT dinucleotide at the point of strand exchange. HJ branch migration catalyzed by RuvA-RuvB allows RuvC to scan DNA until it finds its consensus sequence, where it cleaves and resolves the cruciform DNA. This chain is Crossover junction endodeoxyribonuclease RuvC, found in Campylobacter jejuni subsp. jejuni serotype O:6 (strain 81116 / NCTC 11828).